Reading from the N-terminus, the 698-residue chain is Elongation factor G (698 aa).

One can recognise a tr-type G domain in the interval 8–290 (ERYRNIGISA…AVIEFLPSPV (283 aa)). GTP contacts are provided by residues 17–24 (AHIDAGKT), 88–92 (DTPGH), and 142–145 (NKMD).

This sequence belongs to the TRAFAC class translation factor GTPase superfamily. Classic translation factor GTPase family. EF-G/EF-2 subfamily.

The protein localises to the cytoplasm. Its function is as follows. Catalyzes the GTP-dependent ribosomal translocation step during translation elongation. During this step, the ribosome changes from the pre-translocational (PRE) to the post-translocational (POST) state as the newly formed A-site-bound peptidyl-tRNA and P-site-bound deacylated tRNA move to the P and E sites, respectively. Catalyzes the coordinated movement of the two tRNA molecules, the mRNA and conformational changes in the ribosome. The chain is Elongation factor G from Azoarcus sp. (strain BH72).